The primary structure comprises 399 residues: Beta-1,6-galactosyltransferase GALT31A (399 aa).

Residues M1–S12 are Cytoplasmic-facing. Residues G13–N35 form a helical; Signal-anchor for type II membrane protein membrane-spanning segment. The Lumenal segment spans residues R36–F399.

It belongs to the glycosyltransferase 31 family. Interacts with GALT29A. Mn(2+) serves as cofactor.

It localises to the golgi apparatus membrane. Its pathway is protein modification; protein glycosylation. Beta-galactosyltransferase involved in elongation of beta-1,6-linked galactan side chains on arabinogalactan proteins. Required for the progression of embryogenesis beyond the globular stage. Beta-galactosyltransferase involved in the biosynthesis of type II arabinogalactan. Transfers galactose from UDP-galactose to a mixture of various oligosaccharides derived from arabinogalactan proteins. Forms a complex with GALT29A that can work cooperatively to enhance the activities of adding galactose residues at O6 positions to beta-1,6-linked galactan and beta-1,3-linked galactan. The chain is Beta-1,6-galactosyltransferase GALT31A from Arabidopsis thaliana (Mouse-ear cress).